A 261-amino-acid polypeptide reads, in one-letter code: Troponin T, slow skeletal muscle (261 aa).

Over residues 1 to 30 the composition is skewed to acidic residues; the sequence is MSDTEEQEYEEEQAEDEEAVEEEAPEEPEP. Disordered regions lie at residues 1 to 61 and 108 to 152; these read MSDT…ERVD and ERAE…KKKV. The residue at position 2 (Ser2) is a Phosphoserine; by CK2. The span at 31-40 shows a compositional bias: basic and acidic residues; it reads VAEREEERPK. A compositionally biased stretch (pro residues) spans 42–54; it reads SRPVVPPLIPPKI. Over residues 108-148 the composition is skewed to basic and acidic residues; sequence ERAEQQRFRTEKERERQAKLAEEKMRKEEEEAKKRAEDDAK.

This sequence belongs to the troponin T family. In terms of assembly, interacts with TPM3. In terms of tissue distribution, expressed in soleus muscle. Isoform 4 is predominantly expressed in fast muscles.

In terms of biological role, troponin T is the tropomyosin-binding subunit of troponin, the thin filament regulatory complex which confers calcium-sensitivity to striated muscle actomyosin ATPase activity. The chain is Troponin T, slow skeletal muscle (Tnnt1) from Rattus norvegicus (Rat).